The sequence spans 1124 residues: Angiopoietin-1 receptor (1124 aa).

Residues 1-22 form the signal peptide; it reads MDSLASLVLCGVSLLLSGTVEG. The Extracellular portion of the chain corresponds to 23 to 748; sequence AMDLILINSL…ADLGGGKMLL (726 aa). C44 and C102 are disulfide-bonded. Residues 44–123 form the Ig-like C2-type 1 domain; that stretch reads CIASGWRPHE…RTMKMRQQAS (80 aa). 2 N-linked (GlcNAc...) asparagine glycosylation sites follow: N140 and N158. 3 EGF-like domains span residues 210-252, 254-299, and 301-341; these read RCEA…RTCE, ACEL…LQCN, and ACHP…LQCE. Disulfide bonds link C211–C220, C224–C233, C227–C240, C242–C251, C255–C264, C268–C274, C280–C287, C289–C298, C302–C311, C315–C323, C317–C329, C331–C340, and C370–C424. The 91-residue stretch at 350 to 440 folds into the Ig-like C2-type 2 domain; it reads PKIVDLPDHI…GMVEKPFNIS (91 aa). N399, N438, N464, N560, N596, N649, and N691 each carry an N-linked (GlcNAc...) asparagine glycan. 3 Fibronectin type-III domains span residues 447–541, 545–636, and 641–735; these read PLNA…TASI, PPRG…TLSD, and QPEN…LPES. Residues 749–769 form a helical membrane-spanning segment; that stretch reads IAILGSAGMTCLTVLLAFLII. The Cytoplasmic segment spans residues 770-1124; the sequence is LQLKRANVQR…GIDCSAEEAA (355 aa). Positions 824-1096 constitute a Protein kinase domain; it reads IKFQDVIGEG…QILVSLNRML (273 aa). ATP is bound by residues 830–838 and K855; that span reads IGEGNFGQV. The residue at position 860 (Y860) is a Phosphotyrosine; by autocatalysis. D964 functions as the Proton acceptor in the catalytic mechanism. A phosphotyrosine; by autocatalysis mark is found at Y992, Y1102, and Y1108.

This sequence belongs to the protein kinase superfamily. Tyr protein kinase family. Tie subfamily. In terms of assembly, homodimer. Heterodimer with TIE1. Interacts with ANGPT1, ANGPT2 and ANGPT4. At cell-cell contacts in quiescent cells, forms a signaling complex composed of ANGPT1 plus TEK molecules from two adjoining cells. In the absence of endothelial cell-cell contacts, interaction with ANGPT1 mediates contacts with the extracellular matrix. Interacts with PTPRB; this promotes endothelial cell-cell adhesion. Interacts with DOK2, GRB2, GRB7, GRB14, PIK3R1 and PTPN11/SHP2. Colocalizes with DOK2 at contacts with the extracellular matrix in migrating cells. Interacts (tyrosine phosphorylated) with TNIP2. Interacts (tyrosine phosphorylated) with SHC1 (via SH2 domain). In terms of processing, proteolytic processing leads to the shedding of the extracellular domain (soluble TIE-2 alias sTIE-2). Autophosphorylated on tyrosine residues in response to ligand binding. Autophosphorylation occurs in trans, i.e. one subunit of the dimeric receptor phosphorylates tyrosine residues on the other subunit. Autophosphorylation occurs in a sequential manner, where Tyr-992 in the kinase activation loop is phosphorylated first, followed by autophosphorylation at Tyr-1108 and at additional tyrosine residues. ANGPT1-induced phosphorylation is impaired during hypoxia, due to increased expression of ANGPT2. Phosphorylation is important for interaction with GRB14, PIK3R1 and PTPN11. Phosphorylation at Tyr-1102 is important for interaction with SHC1, GRB2 and GRB7. Phosphorylation at Tyr-1108 is important for interaction with DOK2 and for coupling to downstream signal transduction pathways in endothelial cells. Dephosphorylated by PTPRB. Post-translationally, ubiquitinated. The phosphorylated receptor is ubiquitinated and internalized, leading to its degradation. As to expression, detected in umbilical vein endothelial cells. Proteolytic processing gives rise to a soluble extracellular domain that is detected in blood plasma (at protein level). Predominantly expressed in endothelial cells and their progenitors, the angioblasts. Has been directly found in placenta and lung, with a lower level in umbilical vein endothelial cells, brain and kidney.

It localises to the cell membrane. The protein localises to the cell junction. The protein resides in the focal adhesion. Its subcellular location is the cytoplasm. It is found in the cytoskeleton. It localises to the secreted. The enzyme catalyses L-tyrosyl-[protein] + ATP = O-phospho-L-tyrosyl-[protein] + ADP + H(+). With respect to regulation, angiopoietin binding leads to receptor dimerization and activation by autophosphorylation at Tyr-992 on the kinase activation loop. Inhibited by staurosporine, K252a, PP2, damnacanthal, SB203580, CEP-11207, CEP-11981 and CE-245677. Inhibited by triazine, thienopyrimidine and thiazolopyrimidine derivatives. Functionally, tyrosine-protein kinase that acts as a cell-surface receptor for ANGPT1, ANGPT2 and ANGPT4 and regulates angiogenesis, endothelial cell survival, proliferation, migration, adhesion and cell spreading, reorganization of the actin cytoskeleton, but also maintenance of vascular quiescence. Has anti-inflammatory effects by preventing the leakage of pro-inflammatory plasma proteins and leukocytes from blood vessels. Required for normal angiogenesis and heart development during embryogenesis. Required for post-natal hematopoiesis. After birth, activates or inhibits angiogenesis, depending on the context. Inhibits angiogenesis and promotes vascular stability in quiescent vessels, where endothelial cells have tight contacts. In quiescent vessels, ANGPT1 oligomers recruit TEK to cell-cell contacts, forming complexes with TEK molecules from adjoining cells, and this leads to preferential activation of phosphatidylinositol 3-kinase and the AKT1 signaling cascades. In migrating endothelial cells that lack cell-cell adhesions, ANGT1 recruits TEK to contacts with the extracellular matrix, leading to the formation of focal adhesion complexes, activation of PTK2/FAK and of the downstream kinases MAPK1/ERK2 and MAPK3/ERK1, and ultimately to the stimulation of sprouting angiogenesis. ANGPT1 signaling triggers receptor dimerization and autophosphorylation at specific tyrosine residues that then serve as binding sites for scaffold proteins and effectors. Signaling is modulated by ANGPT2 that has lower affinity for TEK, can promote TEK autophosphorylation in the absence of ANGPT1, but inhibits ANGPT1-mediated signaling by competing for the same binding site. Signaling is also modulated by formation of heterodimers with TIE1, and by proteolytic processing that gives rise to a soluble TEK extracellular domain. The soluble extracellular domain modulates signaling by functioning as decoy receptor for angiopoietins. TEK phosphorylates DOK2, GRB7, GRB14, PIK3R1; SHC1 and TIE1. The sequence is that of Angiopoietin-1 receptor from Homo sapiens (Human).